The sequence spans 172 residues: Large ribosomal subunit protein uL5 (172 aa).

The protein belongs to the universal ribosomal protein uL5 family. Part of the 50S ribosomal subunit; contacts the 5S rRNA and probably tRNA. Forms a bridge to the 30S subunit in the 70S ribosome.

Its function is as follows. This is one of the proteins that bind and probably mediate the attachment of the 5S RNA into the large ribosomal subunit, where it forms part of the central protuberance. In the 70S ribosome it contacts protein S13 of the 30S subunit (bridge B1b), connecting the 2 subunits; this bridge is implicated in subunit movement. May contact the P site tRNA; the 5S rRNA and some of its associated proteins might help stabilize positioning of ribosome-bound tRNAs. This Haloferax mediterranei (strain ATCC 33500 / DSM 1411 / JCM 8866 / NBRC 14739 / NCIMB 2177 / R-4) (Halobacterium mediterranei) protein is Large ribosomal subunit protein uL5.